We begin with the raw amino-acid sequence, 234 residues long: MAKTRPGVASKIKTGRKELDSYTIKGTNKVVRAGDCVLMRPSDAGKPPYVARVEKIEADARNNVKVHCRWYYRPEESLGGRRQFHGAKELFLSDHFDVQSAHTIEGKCIVHTFKNYTRLENVGAEDYYCRFEYKAATGAFTPDRVAVYCKCEMPYNPDDLMVQCEGCKDWYHPACVGMTIEEAKKLDHFVCAECSSDDDVKKSQNGFTSSPADDVKVRLSLFSHLLYRCSITYL.

One can recognise a BAH domain in the interval 29–144 (KVVRAGDCVL…AATGAFTPDR (116 aa)). The PHD-type zinc-finger motif lies at 146–197 (AVYCKCEMPYNPDDLMVQCEGCKDWYHPACVGMTIEEAKKLDHFVCAECSSD).

It belongs to the SHL1/EBS protein family. Recognizes di- and trimethylated histone H3 at lysine 4 (H3K4me2 and H3K4me3). Interacts with HDA6. Expressed ubiquitously, with higher levels in floral buds.

Its subcellular location is the nucleus. Functionally, chromatin remodeling factor that binds to methylated histone (e.g. H3K4me2/3) to prevent their acetylation (e.g. H3K9K14Ac), likely by recruiting histone deacetylase (HDAC) complexes, and thus regulating the transcription of target genes. Negative regulator in developmental processes in a gibberellic acid- (GA-) dependent manner, such as germination, flowering induction, and flower organ specification, probably by modulating developmental gene expression. Involved in the chromatin-mediated repression of floral initiation and controls genes regulating flowering. Negatively regulates the expression of the floral integrator FT epigenetically, by preventing high levels of H3 acetylation, thus maintaining an inactive chromatin conformation at FT locus. This chain is Chromatin remodeling protein EBS, found in Arabidopsis thaliana (Mouse-ear cress).